Consider the following 154-residue polypeptide: Myoglobin (154 aa).

The Globin domain maps to 2-148 (GLSDDEWNHV…FRNDMASKYK (147 aa)). Nitrite is bound at residue His65. His65 serves as a coordination point for O2. Residue His94 participates in heme b binding.

The protein belongs to the globin family. In terms of assembly, monomeric.

Its subcellular location is the cytoplasm. It is found in the sarcoplasm. The enzyme catalyses Fe(III)-heme b-[protein] + nitric oxide + H2O = Fe(II)-heme b-[protein] + nitrite + 2 H(+). It catalyses the reaction H2O2 + AH2 = A + 2 H2O. Its function is as follows. Monomeric heme protein which primary function is to store oxygen and facilitate its diffusion within muscle tissues. Reversibly binds oxygen through a pentacoordinated heme iron and enables its timely and efficient release as needed during periods of heightened demand. Depending on the oxidative conditions of tissues and cells, and in addition to its ability to bind oxygen, it also has a nitrite reductase activity whereby it regulates the production of bioactive nitric oxide. Under stress conditions, like hypoxia and anoxia, it also protects cells against reactive oxygen species thanks to its pseudoperoxidase activity. In Chelonia mydas (Green sea-turtle), this protein is Myoglobin (MB).